The primary structure comprises 165 residues: Protein SEED AND ROOT HAIR PROTECTIVE PROTEIN (165 aa).

The N-terminal stretch at 1–24 (MAFSRLSFAASLIVFSSLIISSVA) is a signal peptide.

The protein belongs to the plant proline-rich protein superfamily. Root hair and seed specific expression. Also observed in other tissues including siliques, roots and flowers.

The protein resides in the secreted. It is found in the cell wall. Functionally, contributes to cell wall structure in root hairs and seeds, especially in phosphate (Pi) deprivation conditions or in the presence of ethylene. Particularly important in maternal tissues (pericarps and seed coats) during seed development, especially under stress conditions. Confers thermotolerance in seed germination rate. The chain is Protein SEED AND ROOT HAIR PROTECTIVE PROTEIN from Arabidopsis thaliana (Mouse-ear cress).